The chain runs to 354 residues: Glycerol-1-phosphate dehydrogenase [NAD(P)+] (354 aa).

Residues 103–107 (GRSVD) and 125–128 (TAAS) contribute to the NAD(+) site. D130 lines the substrate pocket. S134 contributes to the NAD(+) binding site. D176 provides a ligand contact to substrate. Positions 176 and 255 each coordinate Zn(2+). H259 serves as a coordination point for substrate. H271 is a binding site for Zn(2+).

Belongs to the glycerol-1-phosphate dehydrogenase family. As to quaternary structure, homodimer. Zn(2+) serves as cofactor.

Its subcellular location is the cytoplasm. It catalyses the reaction sn-glycerol 1-phosphate + NAD(+) = dihydroxyacetone phosphate + NADH + H(+). The enzyme catalyses sn-glycerol 1-phosphate + NADP(+) = dihydroxyacetone phosphate + NADPH + H(+). It functions in the pathway membrane lipid metabolism; glycerophospholipid metabolism. Catalyzes the NAD(P)H-dependent reduction of dihydroxyacetonephosphate (DHAP or glycerone phosphate) to glycerol 1-phosphate (G1P). The G1P thus generated is used as the glycerophosphate backbone of phospholipids in the cellular membranes of Archaea. In Nitrosopumilus maritimus (strain SCM1), this protein is Glycerol-1-phosphate dehydrogenase [NAD(P)+].